The chain runs to 179 residues: ADP-ribosylation factor-like protein 5A (179 aa).

The N-myristoyl glycine moiety is linked to residue Gly2. GTP-binding positions include 23–30 (GLDNAGKT), 66–70 (DIGGQ), 125–128 (NKQD), and Ala159.

It belongs to the small GTPase superfamily. Arf family.

Functionally, lacks ADP-ribosylation enhancing activity. This chain is ADP-ribosylation factor-like protein 5A (ARL5A), found in Bos taurus (Bovine).